The primary structure comprises 310 residues: Olfactory receptor 2A12 (310 aa).

The Extracellular portion of the chain corresponds to 1 to 24; the sequence is MESNQTWITEVILLGFQVDPALEL. Residue Asn-4 is glycosylated (N-linked (GlcNAc...) asparagine). A helical membrane pass occupies residues 25-48; it reads FLFGFFLLFYSLTLMGNGIILGLI. The Cytoplasmic portion of the chain corresponds to 49–56; it reads YLDSRLHT. The helical transmembrane segment at 57–78 threads the bilayer; it reads PMYVFLSHLAIVDMSYASSTVP. At 79–99 the chain is on the extracellular side; the sequence is KMLANLVMHKKVISFAPCILQ. The cysteines at positions 96 and 188 are disulfide-linked. The helical transmembrane segment at 100–119 threads the bilayer; sequence TFLYLAFAITECLILVMMCY. Residues 120 to 138 lie on the Cytoplasmic side of the membrane; that stretch reads DRYVAICHPLQYTLIMNWR. The helical transmembrane segment at 139–157 threads the bilayer; it reads VCTVLASTCWIFSFLLALV. Residues 158-194 lie on the Extracellular side of the membrane; the sequence is HITLILRLPFCGPQKINHFFCQIMSVFKLACADTRLN. A helical transmembrane segment spans residues 195-218; that stretch reads QVVLFAGSAFILVGPLCLVLVSYL. Over 219-235 the chain is Cytoplasmic; sequence HILVAILRIQSGEGRRK. The helical transmembrane segment at 236–258 threads the bilayer; it reads AFSTCSSHLCVVGLFFGSAIVMY. The Extracellular segment spans residues 259–271; that stretch reads MAPKSSHSQERRK. The helical transmembrane segment at 272–291 threads the bilayer; it reads ILSLFYSLFNPILNPLIYSL. Over 292-310 the chain is Cytoplasmic; it reads RNAEVKGALKRVLWKQRSM.

The protein belongs to the G-protein coupled receptor 1 family.

The protein resides in the cell membrane. Odorant receptor. The chain is Olfactory receptor 2A12 (OR2A12) from Homo sapiens (Human).